The following is a 542-amino-acid chain: Leucine-rich repeat-containing protein 56 (542 aa).

5 LRR repeats span residues 94–115, 117–138, 139–160, 161–182, and 186–206; these read NLDQLKLNGSHLGSLRDLGTSL, HLQVLWLARCGLADLDGIASLP, ALKELYASYNNISDLSPLCLLE, QLEVLDLEGNSVEDLGQVRYLQ, and RLAMLTLEGNLVCLQPAPGPT. Residues 207–250 enclose the LRRCT domain; the sequence is NKVPRGYNYRAEVRKLIPQLQVLDEVPAAHTGPPAPPRLSQDWL. 3 disordered regions span residues 308–377, 396–475, and 507–542; these read LLSE…ADSS, LPYR…LQSR, and RLSPRAQGCPGPKPAPDAAARPPRAAELSHPSPVPT. Over residues 416–426 the composition is skewed to basic and acidic residues; the sequence is RVPEEQVHQAE. A compositionally biased stretch (low complexity) spans 522–532; sequence PDAAARPPRAA.

This sequence belongs to the LRRC56 family. As to quaternary structure, interacts with IFT88.

Its subcellular location is the cell projection. It localises to the cilium. Required for the assembly of dynein arms. The chain is Leucine-rich repeat-containing protein 56 (LRRC56) from Homo sapiens (Human).